Reading from the N-terminus, the 646-residue chain is Ribonuclease Y (646 aa).

The chain crosses the membrane as a helical span at residues 4–24 (VLVVLLSLVLVVLSVLILAVA). Disordered stretches follow at residues 43 to 62 (PRTPAARGVGDVTGPADFDE) and 69 to 118 (LPAP…HGGS). Positions 336–402 (VVTVLHLPGD…RITLAALVSD (67 aa)) constitute a KH domain. In terms of domain architecture, HD spans 462 to 555 (VLAHLIESAH…TQAADQISGG (94 aa)).

Belongs to the RNase Y family.

The protein resides in the cell membrane. In terms of biological role, endoribonuclease that initiates mRNA decay. This is Ribonuclease Y from Frankia casuarinae (strain DSM 45818 / CECT 9043 / HFP020203 / CcI3).